A 225-amino-acid chain; its full sequence is Uracil-DNA glycosylase (225 aa).

The active-site Proton acceptor is the aspartate 65.

It belongs to the uracil-DNA glycosylase (UDG) superfamily. UNG family.

It localises to the cytoplasm. It catalyses the reaction Hydrolyzes single-stranded DNA or mismatched double-stranded DNA and polynucleotides, releasing free uracil.. Functionally, excises uracil residues from the DNA which can arise as a result of misincorporation of dUMP residues by DNA polymerase or due to deamination of cytosine. The sequence is that of Uracil-DNA glycosylase from Bacillus cereus (strain AH187).